A 446-amino-acid polypeptide reads, in one-letter code: Trigger factor (446 aa).

Residues 182 to 267 enclose the PPIase FKBP-type domain; it reads GDKVVVDYQN…VKNIFMMKAI (86 aa).

It belongs to the FKBP-type PPIase family. Tig subfamily.

It is found in the cytoplasm. It carries out the reaction [protein]-peptidylproline (omega=180) = [protein]-peptidylproline (omega=0). Its function is as follows. Involved in protein export. Acts as a chaperone by maintaining the newly synthesized protein in an open conformation. Functions as a peptidyl-prolyl cis-trans isomerase. The polypeptide is Trigger factor (Ehrlichia ruminantium (strain Gardel)).